Consider the following 129-residue polypeptide: Small ribosomal subunit protein uS11 (129 aa).

The protein belongs to the universal ribosomal protein uS11 family. As to quaternary structure, part of the 30S ribosomal subunit. Interacts with proteins S7 and S18. Binds to IF-3.

Its function is as follows. Located on the platform of the 30S subunit, it bridges several disparate RNA helices of the 16S rRNA. Forms part of the Shine-Dalgarno cleft in the 70S ribosome. The protein is Small ribosomal subunit protein uS11 of Lactobacillus gasseri (strain ATCC 33323 / DSM 20243 / BCRC 14619 / CIP 102991 / JCM 1131 / KCTC 3163 / NCIMB 11718 / NCTC 13722 / AM63).